A 363-amino-acid chain; its full sequence is D-proline dehydrogenase (363 aa).

FAD is bound at residue 3–17 (VAIVGGGIIGLFTAY).

The protein belongs to the DadA oxidoreductase family. In terms of assembly, homotetramer. FAD serves as cofactor.

It is found in the cell membrane. The catalysed reaction is D-proline + A = 1-pyrroline-2-carboxylate + AH2. Functionally, catalyzes the dehydrogenation of D-proline. Can also use other D-amino acids, but with lower efficiency. The polypeptide is D-proline dehydrogenase (dpdh) (Pyrobaculum islandicum (strain DSM 4184 / JCM 9189 / GEO3)).